The primary structure comprises 181 residues: Ribulose bisphosphate carboxylase small subunit, chloroplastic 2 (181 aa).

The N-terminal 54 residues, 1–54, are a transit peptide targeting the chloroplast; sequence MASSMLSSAAVVTSPAQATMVAPFTGLKSSAAFPVTRKANNDITSIASNGGRVS.

Belongs to the RuBisCO small chain family. As to quaternary structure, heterohexadecamer of 8 large and 8 small subunits.

Its subcellular location is the plastid. The protein resides in the chloroplast. In terms of biological role, ruBisCO catalyzes two reactions: the carboxylation of D-ribulose 1,5-bisphosphate, the primary event in carbon dioxide fixation, as well as the oxidative fragmentation of the pentose substrate. Both reactions occur simultaneously and in competition at the same active site. Although the small subunit is not catalytic it is essential for maximal activity. The sequence is that of Ribulose bisphosphate carboxylase small subunit, chloroplastic 2 from Brassica napus (Rape).